We begin with the raw amino-acid sequence, 194 residues long: ATP synthase subunit b 1 (194 aa).

A helical membrane pass occupies residues 1-21; that stretch reads MLLGTVVTVLSTLPAIAYAMD.

This sequence belongs to the ATPase B chain family. In terms of assembly, F-type ATPases have 2 components, F(1) - the catalytic core - and F(0) - the membrane proton channel. F(1) has five subunits: alpha(3), beta(3), gamma(1), delta(1), epsilon(1). F(0) has three main subunits: a(1), b(2) and c(10-14). The alpha and beta chains form an alternating ring which encloses part of the gamma chain. F(1) is attached to F(0) by a central stalk formed by the gamma and epsilon chains, while a peripheral stalk is formed by the delta and b chains.

It localises to the cell inner membrane. In terms of biological role, f(1)F(0) ATP synthase produces ATP from ADP in the presence of a proton or sodium gradient. F-type ATPases consist of two structural domains, F(1) containing the extramembraneous catalytic core and F(0) containing the membrane proton channel, linked together by a central stalk and a peripheral stalk. During catalysis, ATP synthesis in the catalytic domain of F(1) is coupled via a rotary mechanism of the central stalk subunits to proton translocation. Component of the F(0) channel, it forms part of the peripheral stalk, linking F(1) to F(0). This Granulibacter bethesdensis (strain ATCC BAA-1260 / CGDNIH1) protein is ATP synthase subunit b 1.